A 139-amino-acid chain; its full sequence is Putative pre-16S rRNA nuclease (139 aa).

This sequence belongs to the YqgF nuclease family.

It is found in the cytoplasm. Functionally, could be a nuclease involved in processing of the 5'-end of pre-16S rRNA. The chain is Putative pre-16S rRNA nuclease from Caldanaerobacter subterraneus subsp. tengcongensis (strain DSM 15242 / JCM 11007 / NBRC 100824 / MB4) (Thermoanaerobacter tengcongensis).